The sequence spans 127 residues: Ribonuclease P protein component 1 (127 aa).

Belongs to the eukaryotic/archaeal RNase P protein component 1 family. Consists of a catalytic RNA component and at least 5 protein subunits. Forms a heterodimeric subcomplex with Rnp4. Reconstituted enzyme missing individual protein subunits is suboptimally active, showing each subunit contributes to optimization of activity.

The protein resides in the cytoplasm. The catalysed reaction is Endonucleolytic cleavage of RNA, removing 5'-extranucleotides from tRNA precursor.. Its function is as follows. Part of ribonuclease P (RNase P), a protein complex that generates mature tRNA molecules by cleaving their 5'-ends. Binds RNase P RNA. The polypeptide is Ribonuclease P protein component 1 (Pyrococcus horikoshii (strain ATCC 700860 / DSM 12428 / JCM 9974 / NBRC 100139 / OT-3)).